A 283-amino-acid chain; its full sequence is ATP phosphoribosyltransferase (283 aa).

The protein belongs to the ATP phosphoribosyltransferase family. Long subfamily. Mg(2+) is required as a cofactor.

The protein localises to the cytoplasm. It carries out the reaction 1-(5-phospho-beta-D-ribosyl)-ATP + diphosphate = 5-phospho-alpha-D-ribose 1-diphosphate + ATP. It functions in the pathway amino-acid biosynthesis; L-histidine biosynthesis; L-histidine from 5-phospho-alpha-D-ribose 1-diphosphate: step 1/9. Feedback inhibited by histidine. In terms of biological role, catalyzes the condensation of ATP and 5-phosphoribose 1-diphosphate to form N'-(5'-phosphoribosyl)-ATP (PR-ATP). Has a crucial role in the pathway because the rate of histidine biosynthesis seems to be controlled primarily by regulation of HisG enzymatic activity. This Phocaeicola vulgatus (strain ATCC 8482 / DSM 1447 / JCM 5826 / CCUG 4940 / NBRC 14291 / NCTC 11154) (Bacteroides vulgatus) protein is ATP phosphoribosyltransferase.